A 288-amino-acid polypeptide reads, in one-letter code: NH(3)-dependent NAD(+) synthetase (288 aa).

46 to 53 (GISGGQDS) is an ATP binding site. Aspartate 52 is a Mg(2+) binding site. Arginine 153 contacts deamido-NAD(+). Threonine 173 provides a ligand contact to ATP. Glutamate 178 is a Mg(2+) binding site. Deamido-NAD(+)-binding residues include lysine 186 and aspartate 193. Positions 202 and 224 each coordinate ATP. 273-274 (HK) is a deamido-NAD(+) binding site.

It belongs to the NAD synthetase family. In terms of assembly, homodimer.

It carries out the reaction deamido-NAD(+) + NH4(+) + ATP = AMP + diphosphate + NAD(+) + H(+). Its pathway is cofactor biosynthesis; NAD(+) biosynthesis; NAD(+) from deamido-NAD(+) (ammonia route): step 1/1. In terms of biological role, catalyzes the ATP-dependent amidation of deamido-NAD to form NAD. Uses ammonia as a nitrogen source. This chain is NH(3)-dependent NAD(+) synthetase, found in Deinococcus geothermalis (strain DSM 11300 / CIP 105573 / AG-3a).